The chain runs to 95 residues: Stationary phase-expressed protein 1 (95 aa).

The chain crosses the membrane as a helical span at residues 20–38 (FRYIMLGLVGAAVVPTAYM).

The protein resides in the mitochondrion membrane. In Saccharomyces cerevisiae (strain RM11-1a) (Baker's yeast), this protein is Stationary phase-expressed protein 1 (SPG1).